Here is a 245-residue protein sequence, read N- to C-terminus: tRNA (guanine-N(1)-)-methyltransferase (245 aa).

Residues Gly-111 and 131-136 each bind S-adenosyl-L-methionine; that span reads MGDYVL.

Belongs to the RNA methyltransferase TrmD family. In terms of assembly, homodimer.

The protein resides in the cytoplasm. It carries out the reaction guanosine(37) in tRNA + S-adenosyl-L-methionine = N(1)-methylguanosine(37) in tRNA + S-adenosyl-L-homocysteine + H(+). Its function is as follows. Specifically methylates guanosine-37 in various tRNAs. In Staphylococcus epidermidis (strain ATCC 12228 / FDA PCI 1200), this protein is tRNA (guanine-N(1)-)-methyltransferase.